Consider the following 496-residue polypeptide: MEPILQMKGISKKFGNVKVLDNVDLTLYRGRVLALLGENGAGKSTLMKILCGIYEKDEGSIYLKGKKVNIRNVRDAEKYGIAMIHQELNLVPSLSVAENIFLGREYVRTFNSIDWKKIKQESAKILHELGMDLNVDRLVKHLSVGEQQMVEIARSLLMNAEILVMDEPTAALTEGETRRLFEVIKRLRKEGKSIIYISHRMNEIFEICDDYIVLRDGCLISQGEISEVTRDDLVKMMVGRELKEHFPYECSSPGEEILRVENLTVKGMFEKVSFVVKKGEVVGFAGLIGAGRTEVAKTIFGFYKKTSGKIYLGGEEVKINSPRDAIEKGIMYLSEDRRNEGLIIKHTLKENMTLSALKKISDYIGTINFSKERSIVNEMIQKLNIKSFSPNQKIFRLSGGNQQKVAIAKCLLTNPKLIILDEPTRGIDVGAKNEIYKLINDLKRQGIGIILISSELPEVLNISDRIIVMHEGKITGEISREEATEEKVMLKAVGGE.

2 ABC transporter domains span residues 5-241 and 252-496; these read LQMK…VGRE and SPGE…VGGE. 37–44 contacts ATP; the sequence is GENGAGKS.

This sequence belongs to the ABC transporter superfamily. Ribose importer (TC 3.A.1.2.1) family. In terms of assembly, the complex is composed of an ATP-binding protein (RbsA), two transmembrane proteins (RbsC) and a solute-binding protein (RbsB).

It is found in the cell membrane. The enzyme catalyses D-ribose(out) + ATP + H2O = D-ribose(in) + ADP + phosphate + H(+). Functionally, part of the ABC transporter complex RbsABC involved in ribose import. Responsible for energy coupling to the transport system. This is Ribose import ATP-binding protein RbsA from Caldanaerobacter subterraneus subsp. tengcongensis (strain DSM 15242 / JCM 11007 / NBRC 100824 / MB4) (Thermoanaerobacter tengcongensis).